Consider the following 348-residue polypeptide: Chaperone protein DnaJ (348 aa).

A J domain is found at 3–65; sequence DLYGILGVDH…EQRQRYDRHV (63 aa). The CR-type zinc finger occupies 109–191; it reads GGSQVVKIDS…CYGNGSRSAP (83 aa). The Zn(2+) site is built by Cys122, Cys125, Cys139, Cys142, Cys165, Cys168, Cys179, and Cys182. 4 CXXCXGXG motif repeats span residues 122–129, 139–146, 165–172, and 179–186; these read CDVCNGTR, CFDCNGSG, CSKCRGNG, and CRRCYGNG.

The protein belongs to the DnaJ family. In terms of assembly, homodimer. Zn(2+) serves as cofactor.

The protein resides in the cytoplasm. In terms of biological role, participates actively in the response to hyperosmotic and heat shock by preventing the aggregation of stress-denatured proteins and by disaggregating proteins, also in an autonomous, DnaK-independent fashion. Unfolded proteins bind initially to DnaJ; upon interaction with the DnaJ-bound protein, DnaK hydrolyzes its bound ATP, resulting in the formation of a stable complex. GrpE releases ADP from DnaK; ATP binding to DnaK triggers the release of the substrate protein, thus completing the reaction cycle. Several rounds of ATP-dependent interactions between DnaJ, DnaK and GrpE are required for fully efficient folding. Also involved, together with DnaK and GrpE, in the DNA replication of plasmids through activation of initiation proteins. The sequence is that of Chaperone protein DnaJ from Tropheryma whipplei (strain TW08/27) (Whipple's bacillus).